A 186-amino-acid chain; its full sequence is Casparian strip membrane protein 5 (186 aa).

The Cytoplasmic segment spans residues 1-25 (MKTDAIELGVAKDSTPIGGANRGVS). Residues 26–46 (ILDFILRLVALVGTLASAILM) form a helical membrane-spanning segment. Residues 47–73 (GTTNETLPFATQFIRFRAEYDDLPTFT) are Extracellular-facing. The N-linked (GlcNAc...) asparagine glycan is linked to Asn-50. A helical transmembrane segment spans residues 74–94 (FFVVANIVVSGYLLLSLPLSI). Residues 95–106 (VNIVRSTAKNRR) lie on the Cytoplasmic side of the membrane. The chain crosses the membrane as a helical span at residues 107 to 127 (IILIIFDTAMLALLTAGASAA). The Extracellular portion of the chain corresponds to 128–156 (AAIVYLAHKGNTRANWFAICQQFNSFCER). The helical transmembrane segment at 157 to 177 (ISGSLIGSFVGVAVFILLILM) threads the bilayer. Topologically, residues 178 to 186 (SASALSRRN) are cytoplasmic.

It belongs to the Casparian strip membrane proteins (CASP) family. Homodimer and heterodimers.

The protein localises to the cell membrane. Regulates membrane-cell wall junctions and localized cell wall deposition. Required for establishment of the Casparian strip membrane domain (CSD) and the subsequent formation of Casparian strips, a cell wall modification of the root endodermis that determines an apoplastic barrier between the intraorganismal apoplasm and the extraorganismal apoplasm and prevents lateral diffusion. This chain is Casparian strip membrane protein 5, found in Ricinus communis (Castor bean).